A 33-amino-acid polypeptide reads, in one-letter code: Potassium channel toxin alpha-KTx 24.1 (33 aa).

4 disulfides stabilise this stretch: Cys4/Cys23, Cys9/Cys28, Cys13/Cys30, and Cys18/Cys33.

This sequence belongs to the short scorpion toxin superfamily. Potassium channel inhibitor family. Alpha-KTx 24 subfamily. Post-translationally, contains 4 disulfide bonds. As to expression, expressed by the venom gland.

The protein localises to the secreted. Its function is as follows. Reversibly blocks voltage-gated potassium channels Kv1.2/KCNA2, Kv1.3/KCNA3 and, weakly, Shaker B. The chain is Potassium channel toxin alpha-KTx 24.1 from Pandinus imperator (Emperor scorpion).